A 452-amino-acid chain; its full sequence is Protoheme IX farnesyltransferase, mitochondrial (452 aa).

The N-terminal 27 residues, 1 to 27, are a transit peptide targeting the mitochondrion; that stretch reads MSLVIQPLLMRALNPNLSSILISGRGF. The next 7 membrane-spanning stretches (helical) occupy residues 152-172, 235-255, 267-287, 291-311, 341-361, 364-386, and 417-437; these read VLVMLSAICSYALSPYPATVL, ILWLGVNPTVAFLGFSNIALY, IINTWVGALVGAIPPLMGWAA, LSHPGAWCLAGLLYAWQFPHF, VALRYSLLMFPLCFGLSYFNV, WYYQLDSAFVNAWMSLWAFKFYF, and TFWVSVLHLPAVLILAILHKK.

It belongs to the UbiA prenyltransferase family.

It is found in the mitochondrion membrane. Converts protoheme IX and farnesyl diphosphate to heme O. This is Protoheme IX farnesyltransferase, mitochondrial (COX10) from Kluyveromyces lactis (strain ATCC 8585 / CBS 2359 / DSM 70799 / NBRC 1267 / NRRL Y-1140 / WM37) (Yeast).